The primary structure comprises 805 residues: Putative cation-transporting ATPase MJ1226 (805 aa).

Helical transmembrane passes span 53–73, 75–95, 226–246, and 258–278; these read SYFW…SAII, HWVD…VGFW, IGDY…AVEL, and FALV…LSIT. The active-site 4-aspartylphosphate intermediate is D311. 6 consecutive transmembrane segments (helical) span residues 615–637, 641–663, 680–700, 712–734, 747–769, and 773–790; these read YVIY…ILIL, PITA…AIAY, ILML…LIFY, ELQS…VTRI, LLFW…GIFM, and GWDL…WMLI.

The protein belongs to the cation transport ATPase (P-type) (TC 3.A.3) family. Type IIIA subfamily.

Its subcellular location is the cell membrane. The enzyme catalyses ATP + H2O = ADP + phosphate + H(+). The sequence is that of Putative cation-transporting ATPase MJ1226 from Methanocaldococcus jannaschii (strain ATCC 43067 / DSM 2661 / JAL-1 / JCM 10045 / NBRC 100440) (Methanococcus jannaschii).